A 317-amino-acid polypeptide reads, in one-letter code: Transcription factor elt-3 (317 aa).

Residues 1-34 form a disordered region; sequence METANYYLPSPPYSSTSSSDSRESRMNTPIPTTY. The GATA-type zinc-finger motif lies at 244 to 268; that stretch reads CSNCKTRETTLWRRNGEGGVECNAC. Residues 290-317 form a disordered region; the sequence is KRNRRPRNESPNSAIRNTHQRHGHAAAC. The span at 307-317 shows a compositional bias: basic residues; that stretch reads THQRHGHAAAC.

As to quaternary structure, interacts with skn-1; interaction may enhance transcriptional activation of target genes. Expressed in head, trunk and tail. Expression decreases with age in the hypodermal cells and the pharyngeal-intestinal valve cells in the head, eventually showing little or no expression in about 14 day old worms. Expressed in hypodermal, but not in intestinal, cells at 1 day of age. Expression in the hypodermal and intestinal cells in the trunk region decreases quickly between day 3 and day 5 of adulthood. Expression in the tail between days 3 and 14 stays approximately uniform.

Its subcellular location is the nucleus. In terms of biological role, transcription factor. Required, in concert with signal transducer and transcription factor sta-2, for up-regulation of the vacuolar H(+)-ATPase and acceleration of lysosome maturation at molt. Involved in regulating hypodermal development, perhaps acting downstream of transcription factor elt-1. Modulates environmentally induced changes in collagen gene expression, including rol-6, sqt-1, lon-3, and dpy-13. Involved in regulating expression of various genes, including gst-4, sod-3, ugt-9, and col-144. In response to oxidative stress, required to up-regulate expression of gst-4 mRNA. Regulated by the Insulin/IGF-1-like signaling (IIS) mediated pathway. Plays a role in longevity. May regulate the expression of genes that control sensitivity to osmotic stress, in conjunction with the GATA region-binding transcription factor elt-2. May form a transcriptional circuit with GATA factors egl-18 and elt-6. The sequence is that of Transcription factor elt-3 from Caenorhabditis elegans.